Consider the following 1257-residue polypeptide: Receptor tyrosine-protein kinase erbB-2 (1257 aa).

A signal peptide spans 1–22; sequence MELAAWCRWGFLLALLPPGIAG. At 23–654 the chain is on the extracellular side; sequence TQVCTGTDMK…PAEQRASPVT (632 aa). Cysteines 26 and 53 form a disulfide. N-linked (GlcNAc...) asparagine glycans are attached at residues Asn68 and Asn188. Intrachain disulfides connect Cys163–Cys193, Cys196–Cys205, Cys200–Cys213, Cys221–Cys228, Cys225–Cys236, Cys237–Cys245, Cys241–Cys253, Cys256–Cys265, Cys269–Cys296, Cys300–Cys312, Cys316–Cys332, Cys335–Cys339, Cys343–Cys368, Cys476–Cys506, Cys513–Cys522, and Cys517–Cys530. The N-linked (GlcNAc...) asparagine glycan is linked to Asn260. A glycan (N-linked (GlcNAc...) asparagine) is linked at Asn532. Disulfide bonds link Cys533-Cys542, Cys546-Cys562, Cys565-Cys578, Cys569-Cys586, Cys589-Cys598, Cys602-Cys625, Cys628-Cys636, and Cys632-Cys644. Asn573 carries an N-linked (GlcNAc...) asparagine glycan. Asn631 carries an N-linked (GlcNAc...) asparagine glycan. Residues 655–677 form a helical membrane-spanning segment; that stretch reads FIIATVVGVLLFLILVVVVGILI. The interval 678–691 is required for interaction with KPNB1 and EEA1; it reads KRRRQKIRKYTMRR. Residues 678 to 691 carry the Nuclear localization signal motif; it reads KRRRQKIRKYTMRR. The Cytoplasmic segment spans residues 678–1257; the sequence is KRRRQKIRKY…PEYLGLDVPV (580 aa). Positions 722–989 constitute a Protein kinase domain; it reads LRKVKVLGSG…RMARDPQRFV (268 aa). ATP contacts are provided by residues 728-736 and Lys755; that span reads LGSGAFGTV. The Proton acceptor role is filled by Asp847. A Phosphotyrosine modification is found at Tyr879. The disordered stretch occupies residues 1029–1181; that stretch reads QQGFFSPDPT…PKTLSPGKNG (153 aa). Residues Ser1056, Ser1080, Ser1085, and Ser1109 each carry the phosphoserine modification. Tyr1114 is modified (phosphotyrosine). Position 1141 is a phosphotyrosine; by autocatalysis (Tyr1141). A compositionally biased stretch (pro residues) spans 1149–1163; it reads PQPPLTPEGPLPPVR. A Phosphothreonine modification is found at Thr1168. The segment at 1197 to 1199 is interaction with PIK3C2B; that stretch reads EYL. Tyr1198 is subject to Phosphotyrosine. The interval 1200–1257 is disordered; sequence VPREGTASPPHPSPAFSPAFDNLYYWDQNSSEQGPPPSNFEGTPTAENPEYLGLDVPV. A Phosphotyrosine; by autocatalysis modification is found at Tyr1250.

It belongs to the protein kinase superfamily. Tyr protein kinase family. EGF receptor subfamily. Homodimer. Heterodimer with EGFR, ERBB3 and ERBB4. Part of a complex with EGFR and either PIK3C2A or PIK3C2B. May interact with PIK3C2B when phosphorylated on Tyr-1198. Interacts with PRKCABP and PLXNB1. Interacts (when phosphorylated on Tyr-1250) with MEMO1. Interacts with MUC1. Interacts (when phosphorylated on Tyr-1141) with GRB7 (via SH2 domain). Interacts (when phosphorylated on Tyr-1250) with ERBIN Interacts with SRC, KPNB1, RANBP2, EEA1, CRM1, CLTC, PTK6, RPA194, MYOC and ACTB. Interacts with HSP90AA1 and HSP90AB1; the interaction suppresses ERBB2 kinase activity. Interacts with SORL1; this interaction regulates ERBB2 subcellular distribution by promoting its recycling after internalization from endosomes back to the plasma membrane, hence stimulates ERBB2-mediated signaling. Interacts with SH3BGRL. Interacts with ROR1. In terms of processing, autophosphorylated. Autophosphorylation occurs in trans, i.e. one subunit of the dimeric receptor phosphorylates tyrosine residues on the other subunit. Ligand-binding increases phosphorylation on tyrosine residues. Signaling via SEMA4C promotes phosphorylation at Tyr-1250. Dephosphorylated by PTPN12.

It is found in the cell membrane. The protein resides in the cell projection. It localises to the ruffle membrane. The protein localises to the early endosome. Its subcellular location is the cytoplasm. It is found in the perinuclear region. The protein resides in the nucleus. The catalysed reaction is L-tyrosyl-[protein] + ATP = O-phospho-L-tyrosyl-[protein] + ADP + H(+). Functionally, protein tyrosine kinase that is part of several cell surface receptor complexes, but that apparently needs a coreceptor for ligand binding. Essential component of a neuregulin-receptor complex, although neuregulins do not interact with it alone. GP30 is a potential ligand for this receptor. Regulates outgrowth and stabilization of peripheral microtubules (MTs). Upon ERBB2 activation, the MEMO1-RHOA-DIAPH1 signaling pathway elicits the phosphorylation and thus the inhibition of GSK3B at cell membrane. This prevents the phosphorylation of APC and CLASP2, allowing its association with the cell membrane. In turn, membrane-bound APC allows the localization of MACF1 to the cell membrane, which is required for microtubule capture and stabilization. Interacts (preferentially with the tyrosine phosphorylated form) with CPNE3; this interaction occurs at the cell membrane and is increased in a growth factor heregulin-dependent manner. In the nucleus is involved in transcriptional regulation. Associates with the 5'-TCAAATTC-3' sequence in the PTGS2/COX-2 promoter and activates its transcription. Implicated in transcriptional activation of CDKN1A; the function involves STAT3 and SRC. Involved in the transcription of rRNA genes by RNA Pol I and enhances protein synthesis and cell growth. The chain is Receptor tyrosine-protein kinase erbB-2 (Erbb2) from Rattus norvegicus (Rat).